An 85-amino-acid polypeptide reads, in one-letter code: Growth factor (85 aa).

The N-terminal stretch at 1-19 is a signal peptide; the sequence is MVPRDLVATLLCAMCIVQA. The region spanning 33 to 77 is the EGF-like domain; sequence RIKLCNDDYKNYCLNNGTCFTVALNNVSLNPFCACHINYVGSRCQ. Intrachain disulfides connect Cys-37–Cys-51, Cys-45–Cys-65, and Cys-67–Cys-76. N-linked (GlcNAc...) asparagine; by host glycosylation is found at Asn-48 and Asn-58.

Its subcellular location is the secreted. Functionally, stimulates the growth of some tissues. The sequence is that of Growth factor (MGF) from Oryctolagus cuniculus (Rabbit).